The sequence spans 157 residues: Transcription elongation factor GreA (157 aa).

This sequence belongs to the GreA/GreB family.

In terms of biological role, necessary for efficient RNA polymerase transcription elongation past template-encoded arresting sites. The arresting sites in DNA have the property of trapping a certain fraction of elongating RNA polymerases that pass through, resulting in locked ternary complexes. Cleavage of the nascent transcript by cleavage factors such as GreA or GreB allows the resumption of elongation from the new 3'terminus. GreA releases sequences of 2 to 3 nucleotides. The sequence is that of Transcription elongation factor GreA from Azorhizobium caulinodans (strain ATCC 43989 / DSM 5975 / JCM 20966 / LMG 6465 / NBRC 14845 / NCIMB 13405 / ORS 571).